We begin with the raw amino-acid sequence, 92 residues long: Small ribosomal subunit protein uS19 (92 aa).

It belongs to the universal ribosomal protein uS19 family.

In terms of biological role, protein S19 forms a complex with S13 that binds strongly to the 16S ribosomal RNA. This chain is Small ribosomal subunit protein uS19, found in Borrelia recurrentis (strain A1).